The following is a 961-amino-acid chain: Transcription factor MYB3R-4 (961 aa).

Residues 1-33 form a disordered region; sequence MEAESSTPQERIPKLRHGRTSGPARRSTRGQWT. HTH myb-type domains are found at residues 24–75, 76–131, and 132–182; these read ARRS…QKVL, NPEL…NPAI, and NKEA…KKKL. 3 DNA-binding regions (H-T-H motif) span residues 52–75, 104–127, and 155–178; these read WKKI…QKVL, WSTI…HNHL, and WAEL…HSSV. Disordered regions lie at residues 390-457 and 534-555; these read GHSV…LIIS and RPHS…EDMG. Composition is skewed to polar residues over residues 391 to 405 and 416 to 430; these read HSVS…NEFN and SSAS…TKSP. Residues 431–444 are compositionally biased toward low complexity; sequence TQSSSSRFTATAAS. Over residues 534 to 554 the composition is skewed to basic and acidic residues; that stretch reads RPHSLPKHEPNMTNEQHHEDM. Residues 612–619 carry the Nuclear localization signal motif; it reads GKKTLVGA. Positions 756–781 are disordered; that stretch reads NTGKPVLSTPGQSVTKAEKAQVSTPR. A compositionally biased stretch (polar residues) spans 764 to 781; sequence TPGQSVTKAEKAQVSTPR.

As to quaternary structure, component of a DREAM-like complex which modulates a variety of developmentally regulated genes and of the mitotic genes in proliferating and differentiated cells. Associates with CDKA-1, RBR1 and E2FB, but not with E2FC, in proliferating cells, at early stages of leaves development. Expressed in roots, cotyledons and leaves, especially in vascular tissues, and in flowers.

It is found in the nucleus. In terms of biological role, transcription factor that binds 5'-AACGG-3' motifs in gene promoters. Involved in the regulation of cytokinesis, probably via the activation of several G2/M phase-specific genes transcription (e.g. KNOLLE). Required for the maintenance of diploidy. Functionally, involved in transcription regulation during induced endoreduplication at the powdery mildew (e.g. G.orontii) infection site, thus promoting G.orontii growth and reproduction. The sequence is that of Transcription factor MYB3R-4 from Arabidopsis thaliana (Mouse-ear cress).